The primary structure comprises 314 residues: Probable carboxylesterase 2 (314 aa).

An Involved in the stabilization of the negatively charged intermediate by the formation of the oxyanion hole motif is present at residues 79 to 81 (HGG). Catalysis depends on residues S158, D254, and H286.

Belongs to the 'GDXG' lipolytic enzyme family. In terms of tissue distribution, expressed in roots and flowers.

The catalysed reaction is a carboxylic ester + H2O = an alcohol + a carboxylate + H(+). Carboxylesterase acting on esters with varying acyl chain length. This Arabidopsis thaliana (Mouse-ear cress) protein is Probable carboxylesterase 2 (CXE2).